The primary structure comprises 250 residues: ATP synthase subunit a (250 aa).

6 consecutive transmembrane segments (helical) span residues 31-51 (SAYMFLSVGVISLLMIGGMAG), 85-105 (FFPLVFSLFMFIAVSNLIGII), 115-135 (LIVTVALALLVFVIVLFYGLY), 144-164 (LFVPSGVPVYILPLVVFIEVI), 194-214 (FVGMLGALGFLGWMGAILPLG), and 217-237 (VAVTALEILVAFLQAYVFTIL).

The protein belongs to the ATPase A chain family. F-type ATPases have 2 components, CF(1) - the catalytic core - and CF(0) - the membrane proton channel. CF(1) has five subunits: alpha(3), beta(3), gamma(1), delta(1), epsilon(1). CF(0) has four main subunits: a, b, b' and c.

Its subcellular location is the cell inner membrane. Key component of the proton channel; it plays a direct role in the translocation of protons across the membrane. The chain is ATP synthase subunit a from Rhodopseudomonas palustris (strain BisB5).